Here is a 594-residue protein sequence, read N- to C-terminus: Pre-mRNA-processing protein 45 (594 aa).

Disordered stretches follow at residues 36 to 63, 223 to 254, 370 to 426, 498 to 523, and 566 to 594; these read TTEY…RKGW, PPRF…TAQD, ETGI…SEMR, AGSS…SKDR, and EQFM…ARDE. Composition is skewed to pro residues over residues 44-53 and 235-244; these read APLPATPGPQ and PAEPPPPVLQ. A compositionally biased stretch (acidic residues) spans 383–397; the sequence is GSEEESDEEEEDEEA. 3 stretches are compositionally biased toward basic and acidic residues: residues 398-417, 513-523, and 578-594; these read IRER…KEMR, EGIKEEMSKDR, and RTAE…ARDE.

Belongs to the SNW family. Associated with the spliceosome.

The protein localises to the nucleus. Involved in pre-mRNA splicing. The protein is Pre-mRNA-processing protein 45 (PRP45) of Cryptococcus neoformans var. neoformans serotype D (strain B-3501A) (Filobasidiella neoformans).